A 400-amino-acid chain; its full sequence is Acetate kinase (400 aa).

N10 serves as a coordination point for Mg(2+). Position 17 (K17) interacts with ATP. R91 contacts substrate. D150 serves as the catalytic Proton donor/acceptor. Residues 210–214, 285–287, and 333–337 contribute to the ATP site; these read HLGNG, DCR, and GIGEN. E387 is a binding site for Mg(2+).

The protein belongs to the acetokinase family. As to quaternary structure, homodimer. Requires Mg(2+) as cofactor. The cofactor is Mn(2+).

The protein localises to the cytoplasm. The enzyme catalyses acetate + ATP = acetyl phosphate + ADP. The protein operates within metabolic intermediate biosynthesis; acetyl-CoA biosynthesis; acetyl-CoA from acetate: step 1/2. Its function is as follows. Catalyzes the formation of acetyl phosphate from acetate and ATP. Can also catalyze the reverse reaction. The chain is Acetate kinase from Cronobacter sakazakii (strain ATCC BAA-894) (Enterobacter sakazakii).